Reading from the N-terminus, the 153-residue chain is UPF0235 protein C15orf40 (153 aa).

Positions Met-1 to Arg-12 are enriched in basic residues. The disordered stretch occupies residues Met-1 to Val-55. Position 116 is a phosphoserine (Ser-116).

The protein belongs to the UPF0235 family.

The chain is UPF0235 protein C15orf40 (C15orf40) from Homo sapiens (Human).